We begin with the raw amino-acid sequence, 500 residues long: Probable cytosol aminopeptidase (500 aa).

The Mn(2+) site is built by lysine 262 and aspartate 267. Lysine 274 is a catalytic residue. Aspartate 285, aspartate 344, and glutamate 346 together coordinate Mn(2+). Residue arginine 348 is part of the active site.

It belongs to the peptidase M17 family. The cofactor is Mn(2+).

The protein localises to the cytoplasm. The enzyme catalyses Release of an N-terminal amino acid, Xaa-|-Yaa-, in which Xaa is preferably Leu, but may be other amino acids including Pro although not Arg or Lys, and Yaa may be Pro. Amino acid amides and methyl esters are also readily hydrolyzed, but rates on arylamides are exceedingly low.. The catalysed reaction is Release of an N-terminal amino acid, preferentially leucine, but not glutamic or aspartic acids.. Its function is as follows. Presumably involved in the processing and regular turnover of intracellular proteins. Catalyzes the removal of unsubstituted N-terminal amino acids from various peptides. This is Probable cytosol aminopeptidase from Ehrlichia ruminantium (strain Gardel).